A 981-amino-acid polypeptide reads, in one-letter code: Calsyntenin-1 (981 aa).

The first 28 residues, 1–28, serve as a signal peptide directing secretion; that stretch reads MLRRPAPALAPAARLLLAGLLCGGGVWA. The Extracellular segment spans residues 29–859; the sequence is ARVNKHKPWL…PHPFAVVPST (831 aa). 2 consecutive Cadherin domains span residues 38–164 and 165–265; these read LEPT…APVF and KEKS…TPGW. Residues N346, N366, and N515 are each glycosylated (N-linked (GlcNAc...) asparagine). A helical transmembrane segment spans residues 860–880; sequence ATVVIVVCVSFLVFMIILGVF. The Cytoplasmic portion of the chain corresponds to 881–981; sequence RIRAAHRRTM…LEWDDSTLSY (101 aa). The interval 915 to 981 is disordered; sequence METYEDQHSS…LEWDDSTLSY (67 aa). Residues 925–960 show a composition bias toward acidic residues; that stretch reads EEEEEEEEEEESEDGEEEDDITSAESESSEEEEGEQ. Residues 962–981 show a composition bias toward polar residues; the sequence is DPQNATRQQQLEWDDSTLSY.

It belongs to the calsyntenin family. As to quaternary structure, directly interacts with APBA2. Forms a tripartite complex with APBA2 and APP. Interacts with KLC1. In terms of assembly, interacts with APBB1; this interaction stabilizes AlcICD metabolism. Interacts with PSEN1. Post-translationally, proteolytically processed under normal cellular conditions. A primary zeta-cleavage generates a large extracellular (soluble) N-terminal domain (sAlc) and a short C-terminal transmembrane fragment (CTF1). A secondary cleavage catalyzed by presenilin gamma-secretase within the transmembrane domain releases the beta-Alc-alpha chain in the extracellular milieu and produces an intracellular fragment (AlcICD). This processing is strongly suppressed in the tripartite complex formed with APBA2 and APP, which seems to prevent the association with PSEN1. In terms of tissue distribution, expressed in the brain and, a lower level, in the heart, skeletal muscle, kidney and placenta. Accumulates in dystrophic neurites around the amyloid core of Alzheimer disease senile plaques (at protein level).

Its subcellular location is the postsynaptic cell membrane. The protein localises to the endoplasmic reticulum membrane. The protein resides in the golgi apparatus membrane. It localises to the cell projection. It is found in the neuron projection. Its subcellular location is the nucleus. Its function is as follows. Postsynaptic adhesion molecule that binds to presynaptic neurexins to mediate both excitatory and inhibitory synapse formation. Promotes synapse development by acting as a cell adhesion molecule at the postsynaptic membrane, which associates with neurexin-alpha at the presynaptic membrane. Also functions as a cargo in axonal anterograde transport by acting as a molecular adapter that promotes KLC1 association with vesicles. Complex formation with APBA2 and APP, stabilizes APP metabolism and enhances APBA2-mediated suppression of beta-APP40 secretion, due to the retardation of intracellular APP maturation. Functionally, as intracellular fragment AlcICD, suppresses APBB1-dependent transactivation stimulated by APP C-terminal intracellular fragment (AICD), most probably by competing with AICD for APBB1-binding. In terms of biological role, in complex with APBA2 and C99, a C-terminal APP fragment, abolishes C99 interaction with PSEN1 and thus APP C99 cleavage by gamma-secretase, most probably through stabilization of the direct interaction between APBA2 and APP. This Homo sapiens (Human) protein is Calsyntenin-1.